We begin with the raw amino-acid sequence, 498 residues long: Transcription factor bHLH78 (498 aa).

Disordered stretches follow at residues 1–24 (MDNELFMNTEFPPPPEMATHFEHQ) and 207–297 (LVSP…PPKD). The span at 233–246 (NPISTASPSPSFSK) shows a compositional bias: polar residues. Positions 259-270 (SSEEKGGKRRRE) are enriched in basic and acidic residues. The segment covering 271–281 (EEDDEEEEGEG) has biased composition (acidic residues). In terms of domain architecture, bHLH spans 307-357 (QATDSHSLAERVRREKIGERMKLLQDLVPGCNKVTGKALMLDEIINYVQSL).

In terms of assembly, homodimer. Binds reversibly to CRY2 after blue light illumination. In terms of tissue distribution, expressed constitutively in roots, leaves, stems, and flowers.

The protein localises to the nucleus. Transcription factor that binds DNA to G box 5'-CACGTG-3' and to E-box 5'-CANNTG-3'. Binds to chromatin DNA of the FT gene and promotes its expression, and thus triggers flowering in response to blue light. The sequence is that of Transcription factor bHLH78 (BHLH78) from Arabidopsis thaliana (Mouse-ear cress).